We begin with the raw amino-acid sequence, 566 residues long: NXPE family member 3 (566 aa).

The signal sequence occupies residues 1–32 (MEKYFPKYVPFFSLLALSGLLYLLWSITSLES). N64, N172, N242, N303, and N344 each carry an N-linked (GlcNAc...) asparagine glycan.

This sequence belongs to the NXPE family.

It localises to the secreted. The polypeptide is NXPE family member 3 (nxpe3) (Danio rerio (Zebrafish)).